A 461-amino-acid polypeptide reads, in one-letter code: Bifunctional protein GlmU (461 aa).

Positions 1-243 (MNATVPSAAP…EDELRGINSR (243 aa)) are pyrophosphorylase. UDP-N-acetyl-alpha-D-glucosamine is bound by residues 24–27 (LAAG), Lys38, Gln86, 91–92 (GT), 112–114 (YGD), Gly155, Glu169, Asn184, and Asn241. A Mg(2+)-binding site is contributed by Asp114. Asn241 contributes to the Mg(2+) binding site. The linker stretch occupies residues 244 to 264 (AELAEAEACVQRRLRAAALDG). The interval 265-461 (GATLVAPETV…AALRRKKEQG (197 aa)) is N-acetyltransferase. Arg330 and Lys348 together coordinate UDP-N-acetyl-alpha-D-glucosamine. Catalysis depends on His360, which acts as the Proton acceptor. Positions 363 and 374 each coordinate UDP-N-acetyl-alpha-D-glucosamine. Residues Ala377, 383–384 (NY), Ser402, Ala420, and Arg437 contribute to the acetyl-CoA site.

It in the N-terminal section; belongs to the N-acetylglucosamine-1-phosphate uridyltransferase family. This sequence in the C-terminal section; belongs to the transferase hexapeptide repeat family. As to quaternary structure, homotrimer. It depends on Mg(2+) as a cofactor.

The protein resides in the cytoplasm. It carries out the reaction alpha-D-glucosamine 1-phosphate + acetyl-CoA = N-acetyl-alpha-D-glucosamine 1-phosphate + CoA + H(+). It catalyses the reaction N-acetyl-alpha-D-glucosamine 1-phosphate + UTP + H(+) = UDP-N-acetyl-alpha-D-glucosamine + diphosphate. It functions in the pathway nucleotide-sugar biosynthesis; UDP-N-acetyl-alpha-D-glucosamine biosynthesis; N-acetyl-alpha-D-glucosamine 1-phosphate from alpha-D-glucosamine 6-phosphate (route II): step 2/2. Its pathway is nucleotide-sugar biosynthesis; UDP-N-acetyl-alpha-D-glucosamine biosynthesis; UDP-N-acetyl-alpha-D-glucosamine from N-acetyl-alpha-D-glucosamine 1-phosphate: step 1/1. The protein operates within bacterial outer membrane biogenesis; LPS lipid A biosynthesis. Catalyzes the last two sequential reactions in the de novo biosynthetic pathway for UDP-N-acetylglucosamine (UDP-GlcNAc). The C-terminal domain catalyzes the transfer of acetyl group from acetyl coenzyme A to glucosamine-1-phosphate (GlcN-1-P) to produce N-acetylglucosamine-1-phosphate (GlcNAc-1-P), which is converted into UDP-GlcNAc by the transfer of uridine 5-monophosphate (from uridine 5-triphosphate), a reaction catalyzed by the N-terminal domain. In Gluconacetobacter diazotrophicus (strain ATCC 49037 / DSM 5601 / CCUG 37298 / CIP 103539 / LMG 7603 / PAl5), this protein is Bifunctional protein GlmU.